A 70-amino-acid chain; its full sequence is Envelope small membrane protein (70 aa).

G2 carries the N-myristoyl glycine; by host lipid modification. Residues 2 to 15 (GSLWSKISQLFVDA) are endoplasmic reticulum retention signal. The Virion surface portion of the chain corresponds to 2-25 (GSLWSKISQLFVDAFTEFLVSVVD). The helical transmembrane segment at 26 to 46 (IAIFLAILFGFTVAGWLLVFL) threads the bilayer. The Intravirion segment spans residues 47 to 70 (LRVVCSALLRSRSAIHSPELSKVL).

It belongs to the arteriviridae E protein family. Homooligomer. Associates with itself into higher-order structures, including dimers, trimers and tetramers. Associates with the GP2a-GP3-GP4 complex. Myristoylated. In terms of processing, not glycosylated.

Its subcellular location is the virion membrane. It localises to the host endoplasmic reticulum membrane. It is found in the host Golgi apparatus membrane. The protein resides in the secreted. In terms of biological role, minor envelope protein. May function as a viroporin in the virion envelope that facilitates uncoating of the virus in order to release the genomic RNA into the cytoplasm for subsequent replication. The chain is Envelope small membrane protein (GP2b) from Sus scrofa (Pig).